The following is a 366-amino-acid chain: Mitogen-activated protein kinase 13 (366 aa).

The Protein kinase domain maps to 25–308; the sequence is YLAPAHVGSG…AAQALAHPFF (284 aa). Residues 31–39 and Lys54 each bind ATP; that span reads VGSGAYGAV. The active-site Proton acceptor is the Asp150. A Phosphothreonine; by MAP2K3, MAP2K4, MAP2K6 and MAP2K7 modification is found at Thr180. The TXY signature appears at 180-182; it reads TGY. The residue at position 182 (Tyr182) is a Phosphotyrosine. Ser350 bears the Phosphoserine mark.

It belongs to the protein kinase superfamily. CMGC Ser/Thr protein kinase family. MAP kinase subfamily. Interacts with MAPK8IP2. It depends on Mg(2+) as a cofactor. Post-translationally, dually phosphorylated on Thr-180 and Tyr-182 by MAP2K3/MKK3, MAP2K4/MKK4, MAP2K6/MKK6 and MAP2K7/MKK7, which activates the enzyme. Dephosphorylated by dual specificity phosphatase DUSP1.

The catalysed reaction is L-seryl-[protein] + ATP = O-phospho-L-seryl-[protein] + ADP + H(+). It catalyses the reaction L-threonyl-[protein] + ATP = O-phospho-L-threonyl-[protein] + ADP + H(+). Activated by phosphorylation on threonine and tyrosine by dual specificity kinases, MAP2K3/MKK3, MAP2K6/MKK6, MAP2K4/MKK4 and MAP2K7/MKK7. Activation by ultraviolet radiation, hyperosmotic shock, anisomycin or by TNF-alpha is mediated by MAP2K3/MKK3. Inhibited by dual specificity phosphatase DUSP1. Functionally, serine/threonine kinase which acts as an essential component of the MAP kinase signal transduction pathway. MAPK13 is one of the four p38 MAPKs which play an important role in the cascades of cellular responses evoked by extracellular stimuli such as pro-inflammatory cytokines or physical stress leading to direct activation of transcription factors such as ELK1 and ATF2. Accordingly, p38 MAPKs phosphorylate a broad range of proteins and it has been estimated that they may have approximately 200 to 300 substrates each. MAPK13 is one of the less studied p38 MAPK isoforms. Some of the targets are downstream kinases such as MAPKAPK2, which are activated through phosphorylation and further phosphorylate additional targets. Plays a role in the regulation of protein translation by phosphorylating and inactivating EEF2K. Involved in cytoskeletal remodeling through phosphorylation of MAPT and STMN1. Mediates UV irradiation induced up-regulation of the gene expression of CXCL14. Plays an important role in the regulation of epidermal keratinocyte differentiation, apoptosis and skin tumor development. Phosphorylates the transcriptional activator MYB in response to stress which leads to rapid MYB degradation via a proteasome-dependent pathway. MAPK13 also phosphorylates and down-regulates PRKD1 during regulation of insulin secretion in pancreatic beta cells. The polypeptide is Mitogen-activated protein kinase 13 (Mapk13) (Mus musculus (Mouse)).